The following is a 316-amino-acid chain: ATP synthase gamma chain (316 aa).

Belongs to the ATPase gamma chain family. F-type ATPases have 2 components, CF(1) - the catalytic core - and CF(0) - the membrane proton channel. CF(1) has five subunits: alpha(3), beta(3), gamma(1), delta(1), epsilon(1). CF(0) has three main subunits: a, b and c.

It is found in the cellular thylakoid membrane. Its function is as follows. Produces ATP from ADP in the presence of a proton gradient across the membrane. The gamma chain is believed to be important in regulating ATPase activity and the flow of protons through the CF(0) complex. The polypeptide is ATP synthase gamma chain (Prochlorococcus marinus (strain MIT 9303)).